We begin with the raw amino-acid sequence, 384 residues long: 1-deoxy-D-xylulose 5-phosphate reductoisomerase (384 aa).

NADPH-binding residues include Thr-10, Gly-11, Ser-12, Ile-13, Asn-38, and Asn-120. A 1-deoxy-D-xylulose 5-phosphate-binding site is contributed by Lys-121. Position 122 (Glu-122) interacts with NADPH. Residue Asp-146 coordinates Mn(2+). Residues Ser-147, Glu-148, Ser-172, and His-195 each contribute to the 1-deoxy-D-xylulose 5-phosphate site. Glu-148 contacts Mn(2+). An NADPH-binding site is contributed by Gly-201. 1-deoxy-D-xylulose 5-phosphate is bound by residues Ser-208, Asn-213, Lys-214, and Glu-217. Glu-217 serves as a coordination point for Mn(2+).

Belongs to the DXR family. It depends on Mg(2+) as a cofactor. Mn(2+) serves as cofactor.

It carries out the reaction 2-C-methyl-D-erythritol 4-phosphate + NADP(+) = 1-deoxy-D-xylulose 5-phosphate + NADPH + H(+). It participates in isoprenoid biosynthesis; isopentenyl diphosphate biosynthesis via DXP pathway; isopentenyl diphosphate from 1-deoxy-D-xylulose 5-phosphate: step 1/6. Catalyzes the NADPH-dependent rearrangement and reduction of 1-deoxy-D-xylulose-5-phosphate (DXP) to 2-C-methyl-D-erythritol 4-phosphate (MEP). The protein is 1-deoxy-D-xylulose 5-phosphate reductoisomerase of Protochlamydia amoebophila (strain UWE25).